The following is a 139-amino-acid chain: Large ribosomal subunit protein bL21 (139 aa).

The protein belongs to the bacterial ribosomal protein bL21 family. Part of the 50S ribosomal subunit. Contacts protein L20.

Its function is as follows. This protein binds to 23S rRNA in the presence of protein L20. The sequence is that of Large ribosomal subunit protein bL21 from Prochlorococcus marinus (strain NATL1A).